A 391-amino-acid polypeptide reads, in one-letter code: 3-ketoacyl-CoA thiolase (391 aa).

Cys-95 (acyl-thioester intermediate) is an active-site residue. Residues His-347 and Cys-377 each act as proton acceptor in the active site.

It belongs to the thiolase-like superfamily. Thiolase family. As to quaternary structure, heterotetramer of two alpha chains (FadB) and two beta chains (FadA).

Its subcellular location is the cytoplasm. It carries out the reaction an acyl-CoA + acetyl-CoA = a 3-oxoacyl-CoA + CoA. It functions in the pathway lipid metabolism; fatty acid beta-oxidation. Catalyzes the final step of fatty acid oxidation in which acetyl-CoA is released and the CoA ester of a fatty acid two carbons shorter is formed. The chain is 3-ketoacyl-CoA thiolase from Pseudomonas fragi.